Consider the following 357-residue polypeptide: MFAKLEHLERQFEDLEQQLSSPEVFGDQERYRKLTKAHSDLKEIVEVFRVYRQLNEELAGNKEMLRDSDPEIQAMAREEIDAIEKRLPEMEHELKLLLLPKDPLDEKNVVLEIRAGTGGEEAALFAADLFRMYLRYAEDMGWRVEVLSSSETDSGGFKEIIGLISGDKVYSRMKFESGTHRVQRVPATETQGRIHTSAATVAVMPEADEVELDMKPEDLRFDVYRSSGPGGQSVNTTDSAVRVTHIPTGITVACQDEKSQHKNKAKGLKILASRLLQAQEDKRHEELAEQRRSLVGTGDRSGRIRTYNFPQGRITDHRINLTLYKLDAFMEGQIGDMLDALITHAQTEALKAQANVH.

An N5-methylglutamine modification is found at Gln-232.

Belongs to the prokaryotic/mitochondrial release factor family. In terms of processing, methylated by PrmC. Methylation increases the termination efficiency of RF1.

The protein localises to the cytoplasm. In terms of biological role, peptide chain release factor 1 directs the termination of translation in response to the peptide chain termination codons UAG and UAA. The protein is Peptide chain release factor 1 of Oleidesulfovibrio alaskensis (strain ATCC BAA-1058 / DSM 17464 / G20) (Desulfovibrio alaskensis).